The following is a 202-amino-acid chain: LexA repressor (202 aa).

Positions arginine 28–lysine 48 form a DNA-binding region, H-T-H motif. Active-site for autocatalytic cleavage activity residues include serine 119 and lysine 156.

Belongs to the peptidase S24 family. Homodimer.

It catalyses the reaction Hydrolysis of Ala-|-Gly bond in repressor LexA.. In terms of biological role, represses a number of genes involved in the response to DNA damage (SOS response), including recA and lexA. Binds to the 16 bp palindromic sequence 5'-CTGTATATATATACAG-3'. In the presence of single-stranded DNA, RecA interacts with LexA causing an autocatalytic cleavage which disrupts the DNA-binding part of LexA, leading to derepression of the SOS regulon and eventually DNA repair. The protein is LexA repressor of Yersinia enterocolitica serotype O:8 / biotype 1B (strain NCTC 13174 / 8081).